The following is a 642-amino-acid chain: Mini-chromosome maintenance complex-binding protein (642 aa).

Residues 151-161 (ARVSPSTSYTP) are compositionally biased toward polar residues. The segment at 151 to 197 (ARVSPSTSYTPSRHKRSYEDDDDMDLQPNKQKDQHAGARQAGSVGGL) is disordered. Ser154 is modified (phosphoserine). The residue at position 160 (Thr160) is a Phosphothreonine. Phosphoserine is present on residues Ser167 and Ser298.

This sequence belongs to the MCMBP family. In terms of assembly, interacts with the MCM complex: associates with the MCM3-7 complex which lacks MCM2, while it does not interact with the MCM complex when MCM2 is present (MCM2-7 complex). Interacts with the RPA complex, when composed of all RPA1, RPA2 and RPA3 components, but not with RPA1 or RPA2 alone.

Its subcellular location is the nucleus. In terms of biological role, associated component of the MCM complex that acts as a regulator of DNA replication. Binds to the MCM complex during late S phase and promotes the disassembly of the MCM complex from chromatin, thereby acting as a key regulator of pre-replication complex (pre-RC) unloading from replicated DNA. Can dissociate the MCM complex without addition of ATP; probably acts by destabilizing interactions of each individual subunits of the MCM complex. Required for sister chromatid cohesion. The chain is Mini-chromosome maintenance complex-binding protein (MCMBP) from Homo sapiens (Human).